Reading from the N-terminus, the 26-residue chain is Hainantoxin F1-31.97 (26 aa).

Intrachain disulfides connect C2/C16 and C9/C21.

The protein belongs to the neurotoxin 10 (Hwtx-1) family. 17 (Hntx-9) subfamily. Expressed by the venom gland.

The protein localises to the secreted. Ion channel inhibitor. The protein is Hainantoxin F1-31.97 of Cyriopagopus hainanus (Chinese bird spider).